Reading from the N-terminus, the 120-residue chain is MADAVKYVVMCNCDDEPGALIIAWIDDERPAGGHIQMRSNTRFTETQWGRHIEWKLECRACRKYAPISEMTAAAILDGFGAKLHELRTSTIPDADDPSIAEARHVIPFSALCLRLSQLGG.

This is an uncharacterized protein from Mycobacterium tuberculosis (strain CDC 1551 / Oshkosh).